Reading from the N-terminus, the 450-residue chain is Phosphoglucosamine mutase (450 aa).

Catalysis depends on Ser-103, which acts as the Phosphoserine intermediate. Residues Ser-103, Asp-243, Asp-245, and Asp-247 each contribute to the Mg(2+) site. The residue at position 103 (Ser-103) is a Phosphoserine.

The protein belongs to the phosphohexose mutase family. Requires Mg(2+) as cofactor. Post-translationally, activated by phosphorylation.

The enzyme catalyses alpha-D-glucosamine 1-phosphate = D-glucosamine 6-phosphate. In terms of biological role, catalyzes the conversion of glucosamine-6-phosphate to glucosamine-1-phosphate. The polypeptide is Phosphoglucosamine mutase (Lactobacillus delbrueckii subsp. bulgaricus (strain ATCC 11842 / DSM 20081 / BCRC 10696 / JCM 1002 / NBRC 13953 / NCIMB 11778 / NCTC 12712 / WDCM 00102 / Lb 14)).